The primary structure comprises 47 residues: METATSVAISISCLLISFTGYALYTAFGNPASGLKDPFEGHEDWSDQ.

The chain crosses the membrane as a helical span at residues 7–29 (VAISISCLLISFTGYALYTAFGN).

It belongs to the PsbN family.

It localises to the plastid membrane. In terms of biological role, may play a role in photosystem I and II biogenesis. The protein is Protein PsbN of Aneura mirabilis (Parasitic liverwort).